A 160-amino-acid polypeptide reads, in one-letter code: Type-1 angiotensin II receptor-associated protein (160 aa).

Over 1 to 9 (MELPAVNLK) the chain is Extracellular. Residues 10–30 (VILLVHWLLTTWGCLAFSGSY) traverse the membrane as a helical segment. The Cytoplasmic portion of the chain corresponds to 31–53 (AWGNFTILALGVWAVAQRDSVDA). A helical membrane pass occupies residues 54 to 74 (IGMFLGGLVATIFLDIIYISI). The Extracellular portion of the chain corresponds to 75–86 (FYSSVAVGDTGR). Residues 87-107 (FSAGMAIFSLLLKPFSCCLVY) form a helical membrane-spanning segment. At 108-160 (HMHRERGGELPLRSDFFGPSQEHSAYQTIDSSDSPADPLASLENKGQAAPRGY) the chain is on the cytoplasmic side. The interaction with AGTR1 stretch occupies residues 110 to 122 (HRERGGELPLRSD). Ser-127 is modified (phosphoserine). The tract at residues 128-160 (QEHSAYQTIDSSDSPADPLASLENKGQAAPRGY) is disordered. Thr-135 carries the phosphothreonine modification. The span at 137–149 (DSSDSPADPLASL) shows a compositional bias: low complexity. The residue at position 138 (Ser-138) is a Phosphoserine.

As to quaternary structure, interacts with RACK1, and with the carboxy-terminal region of AGTR1.

The protein localises to the endoplasmic reticulum membrane. It is found in the golgi apparatus membrane. It localises to the cytoplasmic vesicle membrane. Appears to be a negative regulator of type-1 angiotensin II receptor-mediated signaling by regulating receptor internalization as well as mechanism of receptor desensitization such as phosphorylation. May play a role of negative regulator in cardiomyocyte hypertrophy induced by angiotensin II through an inhibition of p38 mitogen-activated protein kinase pathway. Attenuates type-1 angiotensin II receptor growth promoting effect and angiotensin II-induced phosphorylation of protein kinase AKT and of STAT3. The polypeptide is Type-1 angiotensin II receptor-associated protein (Agtrap) (Rattus norvegicus (Rat)).